A 116-amino-acid polypeptide reads, in one-letter code: Carbohydrate-binding protein AQN-3 (116 aa).

A disulfide bridge connects residues Cys-9 and Cys-30. Residues Cys-9–Ile-110 enclose the CUB domain. An N-linked (GlcNAc...) asparagine glycan is attached at Asn-50. A disulfide bond links Cys-53 and Cys-74. Position 85 is a methylhistidine (His-85).

Belongs to the spermadhesin family. The residue at position 85 was identified as a methylhistidine by mass spectrometry.

The protein resides in the secreted. Its function is as follows. AQN proteins mediate the binding of boar spermatozoa to component(s) of the egg's zona pellucida by a carbohydrate-binding mechanism. AQN proteins are secretory components of the male accessory glands being coated to the sperm surface at the time of ejaculation. They possess as well heparin-, serine-protease-inhibitor-binding capability. The sequence is that of Carbohydrate-binding protein AQN-3 from Sus scrofa (Pig).